The following is a 281-amino-acid chain: Hydroxyethylthiazole kinase (281 aa).

The ATP site is built by arginine 124 and serine 169.

Belongs to the Thz kinase family. Mg(2+) is required as a cofactor.

The enzyme catalyses 5-(2-hydroxyethyl)-4-methylthiazole + ATP = 4-methyl-5-(2-phosphooxyethyl)-thiazole + ADP + H(+). It functions in the pathway cofactor biosynthesis; thiamine diphosphate biosynthesis; 4-methyl-5-(2-phosphoethyl)-thiazole from 5-(2-hydroxyethyl)-4-methylthiazole: step 1/1. In terms of biological role, catalyzes the phosphorylation of the hydroxyl group of 4-methyl-5-beta-hydroxyethylthiazole (THZ). The polypeptide is Hydroxyethylthiazole kinase (Rhodococcus erythropolis (strain PR4 / NBRC 100887)).